Reading from the N-terminus, the 183-residue chain is Probable chorismate pyruvate-lyase (183 aa).

Substrate contacts are provided by arginine 79, leucine 115, and glutamate 168.

The protein belongs to the UbiC family.

Its subcellular location is the cytoplasm. It carries out the reaction chorismate = 4-hydroxybenzoate + pyruvate. The protein operates within cofactor biosynthesis; ubiquinone biosynthesis. Its function is as follows. Removes the pyruvyl group from chorismate, with concomitant aromatization of the ring, to provide 4-hydroxybenzoate (4HB) for the ubiquinone pathway. The protein is Probable chorismate pyruvate-lyase of Chromohalobacter salexigens (strain ATCC BAA-138 / DSM 3043 / CIP 106854 / NCIMB 13768 / 1H11).